A 291-amino-acid chain; its full sequence is Phytanoyl-CoA dioxygenase domain-containing protein 1 (291 aa).

The residue at position 55 (threonine 55) is a Phosphothreonine. Residues lysine 102, methionine 141, 156–158, and tryptophan 174 contribute to the 2-oxoglutarate site; that span reads HQD. Residues histidine 156 and aspartate 158 each coordinate Fe cation. Histidine 246 is a binding site for Fe cation. 2-oxoglutarate contacts are provided by serine 248 and arginine 257.

It belongs to the PhyH family. PHYHD1 subfamily. The cofactor is Fe cation.

With respect to regulation, activity is increased by ascorbate. Inhibited by myristoyl-CoA. In terms of biological role, 2-oxoglutarate(2OG)-dependent dioxygenase that catalyzes the conversion of 2-oxoglutarate to succinate and CO(2) in an iron-dependent manner. However, does not couple 2OG turnover to the hydroxylation of acyl-coenzyme A derivatives, implying that it is not directly involved in phytanoyl coenzyme-A metabolism. Does not show detectable activity towards fatty acid CoA thioesters. Isoform 2 probably lacks enzyme activity. Its function is as follows. Isoform 3 probably lacks enzyme activity. The protein is Phytanoyl-CoA dioxygenase domain-containing protein 1 of Homo sapiens (Human).